A 761-amino-acid chain; its full sequence is Membrane protein of ER body-like protein (761 aa).

Disordered regions lie at residues 1–85 and 120–162; these read MGSA…GEHT and GSES…RSRE. Residues 22–31 show a composition bias toward acidic residues; the sequence is EVEEDDEQIV. Positions 48-65 are enriched in low complexity; it reads VDSSTITNTSSSSSSSFS. The segment covering 74 to 85 has biased composition (basic and acidic residues); sequence PDFHSNGDGEHT. A compositionally biased stretch (polar residues) spans 136–154; sequence TADLNGEQTQLEPENGSTS. A coiled-coil region spans residues 186–206; it reads IEEEVDFEDVEYHDVENMMDK. Disordered regions lie at residues 338 to 374 and 416 to 448; these read SSSVLEANPPPRESIVPVVNPSRGNLSPMRKDTTGSA and QTQQKIDNDDSSTADGNHTSDKGRLSPIQPSHG. The span at 416 to 432 shows a compositional bias: polar residues; the sequence is QTQQKIDNDDSSTADGN. 5 helical membrane passes run 549–569, 573–593, 640–660, 670–690, and 702–722; these read IVYGGLLEAITSLGVISSAAG, SMLNILVLGLANLLGGLILII, VAILSFIITGILPPVVYYFSF, VASVFGASLFCIVLLAIAKAH, and ILYYGSIAVSVSGISYVVGNF.

Belongs to the CCC1 family.

It is found in the endoplasmic reticulum membrane. Its function is as follows. Not essential for the accumulation of ER body components, including PYK10. The polypeptide is Membrane protein of ER body-like protein (MEBL) (Arabidopsis thaliana (Mouse-ear cress)).